The primary structure comprises 116 residues: G antigen 10 (116 aa).

The disordered stretch occupies residues 1–116 (MSWRGRSTYR…PEEGEKQSQC (116 aa)). Residues 31–44 (FSDEVEPATPEEGE) show a composition bias toward acidic residues. Basic and acidic residues-rich tracts occupy residues 71-80 (PEADSQEQVH) and 102-116 (EEVK…QSQC).

It belongs to the GAGE family.

This Homo sapiens (Human) protein is G antigen 10 (GAGE10).